We begin with the raw amino-acid sequence, 350 residues long: C-X-C chemokine receptor type 1 (350 aa).

Over 1–39 the chain is Extracellular; that stretch reads MSNITDPQMWDFDDLNFTGMPPADEDYSPCMLETETLNK. N-linked (GlcNAc...) asparagine glycosylation is found at Asn-3 and Asn-16. Residues 40–66 form a helical membrane-spanning segment; the sequence is YVVIIAYALVFLLSLLGNSLVMLVILY. Over 67 to 75 the chain is Cytoplasmic; sequence SRVGRSVTD. The helical transmembrane segment at 76-96 threads the bilayer; sequence VYLLNLALADLLFALTLPIWA. At 97-111 the chain is on the extracellular side; the sequence is ASKVNGWIFGTFLCK. Cysteines 110 and 187 form a disulfide. Residues 112–133 form a helical membrane-spanning segment; sequence VVSLLKEVNFYSGILLLACISV. At 134 to 154 the chain is on the cytoplasmic side; sequence DRYLAIVHATRTLTQKRHLVK. The chain crosses the membrane as a helical span at residues 155–174; it reads FVCLGCWGLSMNLSLPFFLF. The Extracellular segment spans residues 175–199; sequence RQAYHPNNSSPVCYEVLGNDTAKWR. The chain crosses the membrane as a helical span at residues 200–220; the sequence is MVLRILPHTFGFIVPLFVMLF. Topologically, residues 221-242 are cytoplasmic; the sequence is CYGFTLRTLFKAHMGQKHRAMR. A helical transmembrane segment spans residues 243-264; it reads VIFAVVLIFLLCWLPYNLVLLA. Over 265 to 285 the chain is Extracellular; it reads DTLMRTQVIQESCERRNNIGR. Residues 286-308 traverse the membrane as a helical segment; sequence ALDATEILGFLHSCLNPIIYAFI. Residues 309 to 350 lie on the Cytoplasmic side of the membrane; sequence GQNFRHGFLKILAMHGLVSKEFLARHRVTSYTSSSVNVSSNL.

It belongs to the G-protein coupled receptor 1 family. Interacts with IL8. Interacts with GNAI2.

It localises to the cell membrane. Functionally, receptor to interleukin-8, which is a powerful neutrophils chemotactic factor. Binding of IL-8 to the receptor causes activation of neutrophils. This response is mediated via a G-protein that activates a phosphatidylinositol-calcium second messenger system. In Homo sapiens (Human), this protein is C-X-C chemokine receptor type 1 (CXCR1).